Consider the following 290-residue polypeptide: Protease HtpX (290 aa).

2 helical membrane passes run Ile-4–Leu-24 and Gly-36–Ile-56. Zn(2+) is bound at residue His-142. Glu-143 is an active-site residue. Residue His-146 coordinates Zn(2+). The next 2 helical transmembrane spans lie at Gly-150 to Ala-170 and Phe-193 to Trp-213. Glu-219 contributes to the Zn(2+) binding site.

The protein belongs to the peptidase M48B family. Requires Zn(2+) as cofactor.

Its subcellular location is the cell inner membrane. This is Protease HtpX from Ectopseudomonas mendocina (strain ymp) (Pseudomonas mendocina).